Consider the following 706-residue polypeptide: Transmembrane 9 superfamily member 3 (706 aa).

Positions 1-33 (MRVRPKRSVITLMAIVVVMLILRNQFYSSRTRG) are cleaved as a signal peptide. Topologically, residues 34–290 (HGQEPVISSS…LSDEQSIQFH (257 aa)) are lumenal. The chain crosses the membrane as a helical span at residues 291 to 311 (WMSLANSVGIVLSISFITLII). The Cytoplasmic segment spans residues 312–371 (YVRVMYTDKSNSKSPKYMINIEGIETEDDLDDDKYGKYSVYTVAKDWIQNGRPNLFGLKV). Residues 372 to 392 (LILLVSFGVQFLFTIIGSLTI) form a helical membrane-spanning segment. Residues 393-405 (SCSMNKLHNVRNS) lie on the Lumenal side of the membrane. Residues 406–426 (VLTMAILFFVLGAFMASFVGT) form a helical membrane-spanning segment. Residues 427–456 (RLSMVTKTKRTKANYLDDNRYLKDYKKFSP) are Cytoplasmic-facing. The helical transmembrane segment at 457–477 (IFTILCGSSLPGIVMVSTFLL) threads the bilayer. Residues 478–494 (NSIVWAHDSTSALPFKT) lie on the Lumenal side of the membrane. The chain crosses the membrane as a helical span at residues 495–515 (IVFFMSIYFIVCIPLSLFGGI). The Cytoplasmic portion of the chain corresponds to 516 to 553 (VANNIPLPQYWLSGITKDESNSDGNGLFVPKSRAKFNP). Residues 554 to 574 (LVYCGIYLCGIFPLLVIYVEM) form a helical membrane-spanning segment. Residues 575 to 592 (QYVYKSLWLEKTTFYYFY) are Lumenal-facing. Residues 593 to 613 (GFLFLSIILLCVLTMEISIIG) traverse the membrane as a helical segment. Residues 614 to 637 (SYLLMRFCFEDKVVRNNWRWKCFE) lie on the Cytoplasmic side of the membrane. A helical membrane pass occupies residues 638–658 (MGFSGGVYMELYSLYYIFAVL). Topologically, residues 659 to 665 (NIHGFSS) are lumenal. A helical transmembrane segment spans residues 666–686 (ILISICYSLIFNVMCSLGLGA). Over 687–706 (LSYLTASWFINKIYHQKVNL) the chain is Cytoplasmic.

Belongs to the nonaspanin (TM9SF) (TC 9.A.2) family.

Its subcellular location is the golgi apparatus membrane. In terms of biological role, with EMP70 and TMN2, plays a critical role in the late stages of a nutrient-controlled pathway notably regulating FLO11 gene expression. Acts downstream of RAS2 and TOR. Essential for cell adhesion and filamentous growth. May play a role as effector of cellular copper homeostasis. This Saccharomyces cerevisiae (strain ATCC 204508 / S288c) (Baker's yeast) protein is Transmembrane 9 superfamily member 3 (TMN3).